Here is a 370-residue protein sequence, read N- to C-terminus: Translocating chain-associated membrane protein 2 (370 aa).

Over 1 to 22 (MAFRRRTKSYPLFSQEFVIHNH) the chain is Cytoplasmic. A helical membrane pass occupies residues 23 to 43 (ADIGFCLVLCVLIGLMFEVTA). Topologically, residues 44 to 75 (KTAFLFILPQYNISVPTADSETVHYHYGPKDL) are extracellular. Asn-55 is a glycosylation site (N-linked (GlcNAc...) asparagine). The chain crosses the membrane as a helical span at residues 76 to 96 (VTILFYIFITIILHAVVQEYI). At 97-119 (LDKISKRLHLSKVKHSKFNESGQ) the chain is on the cytoplasmic side. Residues 112 to 321 (SKFNESGQLV…HSQLRHWREY (210 aa)) form the TLC domain. A helical membrane pass occupies residues 120-140 (LVVFHFTSVIWCFYVVVTEGY). Residues 141–159 (LTNPRSLWEDYPHVHLPFQ) are Extracellular-facing. The helical transmembrane segment at 160-180 (VKFFYLCQLAYWLHALPELYF) threads the bilayer. Residues 181–191 (QKVRKEEIPRQ) are Cytoplasmic-facing. A helical membrane pass occupies residues 192–209 (LQYICLYLVHIAGAYLLN). Residues 210–214 (LSRLG) are Extracellular-facing. The chain crosses the membrane as a helical span at residues 215–235 (LILLLLQYSTEFLFHTARLFY). Over 236-250 (FADENNEKLFSAWAA) the chain is Cytoplasmic. Residues 251 to 271 (VFGVTRLFILTLAVLAIGFGL) form a helical membrane-spanning segment. At 272-287 (ARMENQAFDPEKGNFN) the chain is on the extracellular side. A helical transmembrane segment spans residues 288–308 (TLFCRLCVLLLVCAAQAWLMW). The Cytoplasmic segment spans residues 309 to 370 (RFIHSQLRHW…SPRTKKLKSP (62 aa)). A disordered region spans residues 348–370 (YHENGVVKAENGTSPRTKKLKSP).

Belongs to the TRAM family. Interacts with SERCA2B and COL1A1.

Its subcellular location is the membrane. In terms of biological role, necessary for collagen type I synthesis. May couple the activity of the ER Ca(2+) pump SERCA2B with the activity of the translocon. This coupling may increase the local Ca(2+) concentration at the site of collagen synthesis, and a high Ca(2+) concentration may be necessary for the function of molecular chaperones involved in collagen folding. Required for proper insertion of the first transmembrane helix N-terminus of TM4SF20 into the ER lumen, may act as a ceramide sensor for regulated alternative translocation (RAT). The protein is Translocating chain-associated membrane protein 2 (TRAM2) of Homo sapiens (Human).